The sequence spans 431 residues: Isochorismate synthase MenF (431 aa).

Lysine 190 acts as the Proton acceptor in catalysis. Glutamate 240 acts as the Proton donor in catalysis. Glutamate 284 and glutamate 416 together coordinate Mg(2+).

This sequence belongs to the isochorismate synthase family. As to quaternary structure, homodimer. Mg(2+) serves as cofactor.

The enzyme catalyses chorismate = isochorismate. It functions in the pathway quinol/quinone metabolism; 1,4-dihydroxy-2-naphthoate biosynthesis; 1,4-dihydroxy-2-naphthoate from chorismate: step 1/7. Its pathway is quinol/quinone metabolism; menaquinone biosynthesis. Functionally, catalyzes the conversion of chorismate to isochorismate. Can also catalyze the reverse reaction, but with a lower efficiency. This chain is Isochorismate synthase MenF, found in Escherichia coli (strain K12).